The sequence spans 232 residues: Ribonuclease 3 (232 aa).

In terms of domain architecture, RNase III spans 7–135; it reads IQAVESKLKF…ILGAVYLDGG (129 aa). Residue Glu48 participates in Mg(2+) binding. Residue Asp52 is part of the active site. Asn121 and Glu124 together coordinate Mg(2+). Glu124 is an active-site residue. The DRBM domain occupies 160 to 229; sequence NPKNRLQQFT…AKQALSTHDD (70 aa).

This sequence belongs to the ribonuclease III family. Homodimer. Mg(2+) serves as cofactor.

The protein localises to the cytoplasm. It catalyses the reaction Endonucleolytic cleavage to 5'-phosphomonoester.. Digests double-stranded RNA. Involved in the processing of primary rRNA transcript to yield the immediate precursors to the large and small rRNAs (23S and 16S). Processes some mRNAs, and tRNAs when they are encoded in the rRNA operon. Processes pre-crRNA and tracrRNA of type II CRISPR loci if present in the organism. In Chlamydia muridarum (strain MoPn / Nigg), this protein is Ribonuclease 3.